Reading from the N-terminus, the 415-residue chain is F-box protein At3g13820 (415 aa).

Residues 1-50 enclose the F-box domain; the sequence is MTTMSNLPAEVLEEILSRTPVTSLRTMRSTCKKWNNLSKKKIIPEAARKQ. Disordered stretches follow at residues 209–229 and 387–415; these read NDYD…EDDD and KQPK…KIIG. Residues 210-229 show a composition bias toward acidic residues; the sequence is DYDDQEDEEEEDDEEYEDDD. Basic residues predominate over residues 403–415; sequence NKNKKGRKIKIIG.

The protein is F-box protein At3g13820 of Arabidopsis thaliana (Mouse-ear cress).